The following is a 59-amino-acid chain: UPF0434 protein LHK_01103 (59 aa).

It belongs to the UPF0434 family.

The chain is UPF0434 protein LHK_01103 from Laribacter hongkongensis (strain HLHK9).